A 326-amino-acid chain; its full sequence is Peroxidase 46 (326 aa).

A signal peptide spans 1-27 (MASSYRINCSTLLHLLMFLSSLLTSSA). An N-linked (GlcNAc...) asparagine glycan is attached at Asn-28. Cystine bridges form between Cys-38–Cys-114, Cys-71–Cys-76, Cys-120–Cys-322, and Cys-199–Cys-233. The Proton acceptor role is filled by His-69. Residues Asp-70, Val-73, Gly-75, Asp-77, and Ser-79 each coordinate Ca(2+). N-linked (GlcNAc...) asparagine glycosylation is present at Asn-85. His-192 is a binding site for heme b. Thr-193 is a Ca(2+) binding site. Ca(2+)-binding residues include Asp-246, Thr-249, and Asp-254. N-linked (GlcNAc...) asparagine glycosylation occurs at Asn-278.

It belongs to the peroxidase family. Classical plant (class III) peroxidase subfamily. Heme b is required as a cofactor. Requires Ca(2+) as cofactor.

It localises to the secreted. It carries out the reaction 2 a phenolic donor + H2O2 = 2 a phenolic radical donor + 2 H2O. Its function is as follows. Removal of H(2)O(2), oxidation of toxic reductants, biosynthesis and degradation of lignin, suberization, auxin catabolism, response to environmental stresses such as wounding, pathogen attack and oxidative stress. These functions might be dependent on each isozyme/isoform in each plant tissue. The sequence is that of Peroxidase 46 (PER46) from Arabidopsis thaliana (Mouse-ear cress).